Reading from the N-terminus, the 132-residue chain is Profilin (132 aa).

This sequence belongs to the profilin family. Occurs in many kinds of cells as a complex with monomeric actin in a 1:1 ratio.

Its subcellular location is the cytoplasm. It localises to the cytoskeleton. Functionally, binds to actin and affects the structure of the cytoskeleton. At high concentrations, profilin prevents the polymerization of actin, whereas it enhances it at low concentrations. By binding to PIP2, it inhibits the formation of IP3 and DG. The polypeptide is Profilin (Naegleria pringsheimi (Amoeba)).